The chain runs to 361 residues: GDSL esterase/lipase At4g18970 (361 aa).

The N-terminal stretch at 1 to 22 (MARVCVMMMAMAIAMAMNIAMG) is a signal peptide. Residue Ser35 is the Nucleophile of the active site. Active-site residues include Asp325 and His328.

It belongs to the 'GDSL' lipolytic enzyme family.

It localises to the secreted. This is GDSL esterase/lipase At4g18970 from Arabidopsis thaliana (Mouse-ear cress).